We begin with the raw amino-acid sequence, 350 residues long: Protein disulfide isomerase Creld2 (350 aa).

The first 22 residues, 1–22 (MHLLLAAAFGLLLLLPPPGAVA), serve as a signal peptide directing secretion. A CXXC motif is present at residues 29–32 (CQRC). 4 disulfides stabilise this stretch: cysteine 29–cysteine 32, cysteine 138–cysteine 152, cysteine 146–cysteine 164, and cysteine 166–cysteine 175. The EGF-like 1 domain occupies 134 to 176 (DCQECQGGSERPCSGNGYCSGDGSRQGDGSCQCHTGYKGPLCI). Residues 191 to 238 (HSICSACDESCKTCSGPSNKDCIQCEVGWARVEDACVDVDECAAETSP) form an FU 1 repeat. Residue asparagine 249 is glycosylated (N-linked (GlcNAc...) asparagine). One copy of the FU 2 repeat lies at 251 to 298 (SYTCEDCDSTCVGCTGKGPANCKECIAGYTKESGQCTDIDECSLEEKA). Residues 261 to 264 (CVGC) carry the CXXC motif. 4 cysteine pairs are disulfide-bonded: cysteine 261-cysteine 264, cysteine 292-cysteine 306, cysteine 299-cysteine 315, and cysteine 317-cysteine 328. The region spanning 288-329 (DIDECSLEEKACKRKNENCYNVPGSFVCVCPEGFEETEDACV) is the EGF-like 2; calcium-binding domain.

This sequence belongs to the CRELD family. Interacts with CHRNA4. Component of a complex containing at least CRELD2, MANF, MATN3 and PDIA4. In terms of tissue distribution, expressed in chondrocytes (at protein level).

It is found in the endoplasmic reticulum. It catalyses the reaction Catalyzes the rearrangement of -S-S- bonds in proteins.. Its function is as follows. Protein disulfide isomerase. Might play a role in the unfolded protein response. May regulate transport of alpha4-beta2 neuronal acetylcholine receptor. The sequence is that of Protein disulfide isomerase Creld2 (Creld2) from Mus musculus (Mouse).